The sequence spans 353 residues: Photosystem II protein D1 (353 aa).

At threonine 2 the chain carries N-acetylthreonine. Threonine 2 carries the phosphothreonine modification. 3 helical membrane-spanning segments follow: residues 29–46, 118–133, and 142–156; these read YIGW…TATS, HFLL…EWEL, and WIAV…AATA. Histidine 118 provides a ligand contact to chlorophyll a. Tyrosine 126 contacts pheophytin a. Residues aspartate 170 and glutamate 189 each coordinate [CaMn4O5] cluster. Residues 197-218 traverse the membrane as a helical segment; sequence FHMLGVAGVFGGSLFSAMHGSL. Residue histidine 198 coordinates chlorophyll a. Residues histidine 215 and 264 to 265 contribute to the a quinone site; that span reads SF. Fe cation is bound at residue histidine 215. Histidine 272 is a Fe cation binding site. The chain crosses the membrane as a helical span at residues 274–288; sequence FLAAWPVVGIWFTAL. The [CaMn4O5] cluster site is built by histidine 332, glutamate 333, aspartate 342, and alanine 344. Residues 345-353 constitute a propeptide that is removed on maturation; that stretch reads SVELDSIDG.

Belongs to the reaction center PufL/M/PsbA/D family. PSII is composed of 1 copy each of membrane proteins PsbA, PsbB, PsbC, PsbD, PsbE, PsbF, PsbH, PsbI, PsbJ, PsbK, PsbL, PsbM, PsbT, PsbX, PsbY, PsbZ, Psb30/Ycf12, at least 3 peripheral proteins of the oxygen-evolving complex and a large number of cofactors. It forms dimeric complexes. It depends on The D1/D2 heterodimer binds P680, chlorophylls that are the primary electron donor of PSII, and subsequent electron acceptors. It shares a non-heme iron and each subunit binds pheophytin, quinone, additional chlorophylls, carotenoids and lipids. D1 provides most of the ligands for the Mn4-Ca-O5 cluster of the oxygen-evolving complex (OEC). There is also a Cl(-1) ion associated with D1 and D2, which is required for oxygen evolution. The PSII complex binds additional chlorophylls, carotenoids and specific lipids. as a cofactor. Tyr-161 forms a radical intermediate that is referred to as redox-active TyrZ, YZ or Y-Z. Post-translationally, C-terminally processed by CTPA; processing is essential to allow assembly of the oxygen-evolving complex and thus photosynthetic growth.

It is found in the plastid. The protein localises to the chloroplast thylakoid membrane. The enzyme catalyses 2 a plastoquinone + 4 hnu + 2 H2O = 2 a plastoquinol + O2. Functionally, photosystem II (PSII) is a light-driven water:plastoquinone oxidoreductase that uses light energy to abstract electrons from H(2)O, generating O(2) and a proton gradient subsequently used for ATP formation. It consists of a core antenna complex that captures photons, and an electron transfer chain that converts photonic excitation into a charge separation. The D1/D2 (PsbA/PsbD) reaction center heterodimer binds P680, the primary electron donor of PSII as well as several subsequent electron acceptors. This chain is Photosystem II protein D1, found in Gnetum parvifolium (Small-leaved jointfir).